The primary structure comprises 211 residues: Large ribosomal subunit protein uL3 (211 aa).

The tract at residues 135–155 (THGNSLSHRAPGSIGQNQSPG) is disordered. Position 152 is an N5-methylglutamine (Q152).

This sequence belongs to the universal ribosomal protein uL3 family. Part of the 50S ribosomal subunit. Forms a cluster with proteins L14 and L19. In terms of processing, methylated by PrmB.

One of the primary rRNA binding proteins, it binds directly near the 3'-end of the 23S rRNA, where it nucleates assembly of the 50S subunit. In Pseudoalteromonas translucida (strain TAC 125), this protein is Large ribosomal subunit protein uL3.